Consider the following 318-residue polypeptide: Protein phosphatase 1 regulatory subunit 3C (318 aa).

The short motif at 84–87 (RVVF) is the PP1-binding motif element. An interaction with EPM2A region spans residues 141–263 (PSADYLSFRN…YRIVHVQWKP (123 aa)). The 109-residue stretch at 149-257 (RNHFQKNSVC…NNEGQNYRIV (109 aa)) folds into the CBM21 domain.

Interacts with PPP1CC catalytic subunit of PP1 and associates with glycogen. Forms complexes with glycogen phosphorylase, glycogen synthase and phosphorylase kinase which is necessary for its regulation of PP1 activity. Also interacts with EPM2A/laforin. In terms of processing, ubiquitinated by NHLRC1/malin in a EPM2A/laforin-dependent manner.

Functionally, acts as a glycogen-targeting subunit for PP1 and regulates its activity. Activates glycogen synthase, reduces glycogen phosphorylase activity and limits glycogen breakdown. Dramatically increases basal and insulin-stimulated glycogen synthesis upon overexpression in a variety of cell types. This Bos taurus (Bovine) protein is Protein phosphatase 1 regulatory subunit 3C.